A 496-amino-acid polypeptide reads, in one-letter code: Costunolide synthase (496 aa).

Residues 4 to 24 form a helical; Signal-anchor for type II membrane protein membrane-spanning segment; that stretch reads FTIFSLVVASLVFFACWALVA. N-linked (GlcNAc...) asparagine glycosylation is found at Asn26, Asn168, Asn280, and Asn412. Residue Cys434 participates in heme binding.

It belongs to the cytochrome P450 family. Heme is required as a cofactor. As to expression, expressed in floral glandular trichomes.

It localises to the membrane. It carries out the reaction germacra-1(10),4,11(13)-trien-12-oate + reduced [NADPH--hemoprotein reductase] + O2 = (+)-costunolide + oxidized [NADPH--hemoprotein reductase] + 2 H2O. It participates in secondary metabolite biosynthesis; terpenoid biosynthesis. Functionally, involved in the biosynthesis of germacrene-derived sesquiterpene lactones. Component of the parthenolide biosynthetic pathway; parthenolide and conjugates are promising anti-cancer drugs highly active against colon cancer cells. Hydroxylates germacrene A acid to 6-alpha-hydroxy-germacrene A acid, a precursor of sesquiterpene lactones that spontaneously undergoes a lactonization which yields costunolide. The protein is Costunolide synthase of Tanacetum parthenium (Feverfew).